Reading from the N-terminus, the 102-residue chain is Gonadotropin subunit beta-1 (102 aa).

Disulfide bonds link cysteine 8–cysteine 51, cysteine 20–cysteine 65, cysteine 31–cysteine 77, cysteine 35–cysteine 79, and cysteine 82–cysteine 89. Residue asparagine 12 is glycosylated (N-linked (GlcNAc...) asparagine).

It belongs to the glycoprotein hormones subunit beta family. In terms of assembly, heterodimer of an alpha and a beta chain.

Its subcellular location is the secreted. Involved in gametogenesis and steroidogenesis. The sequence is that of Gonadotropin subunit beta-1 (cgba) from Thunnus obesus (Bigeye tuna).